We begin with the raw amino-acid sequence, 96 residues long: Signal recognition particle 19 kDa protein (96 aa).

Belongs to the SRP19 family. As to quaternary structure, part of the signal recognition particle protein translocation system, which is composed of SRP and FtsY. Archaeal SRP consists of a 7S RNA molecule of 300 nucleotides and two protein subunits: SRP54 and SRP19.

The protein resides in the cytoplasm. Involved in targeting and insertion of nascent membrane proteins into the cytoplasmic membrane. Binds directly to 7S RNA and mediates binding of the 54 kDa subunit of the SRP. This chain is Signal recognition particle 19 kDa protein, found in Pyrobaculum arsenaticum (strain DSM 13514 / JCM 11321 / PZ6).